Here is a 266-residue protein sequence, read N- to C-terminus: L-aspartate dehydrogenase (266 aa).

Positions 123 and 189 each coordinate NAD(+). Residue His-219 is part of the active site.

This sequence belongs to the L-aspartate dehydrogenase family.

The enzyme catalyses L-aspartate + NADP(+) + H2O = oxaloacetate + NH4(+) + NADPH + H(+). It carries out the reaction L-aspartate + NAD(+) + H2O = oxaloacetate + NH4(+) + NADH + H(+). The protein operates within cofactor biosynthesis; NAD(+) biosynthesis; iminoaspartate from L-aspartate (dehydrogenase route): step 1/1. Specifically catalyzes the NAD or NADP-dependent dehydrogenation of L-aspartate to iminoaspartate. The polypeptide is L-aspartate dehydrogenase (Cupriavidus taiwanensis (strain DSM 17343 / BCRC 17206 / CCUG 44338 / CIP 107171 / LMG 19424 / R1) (Ralstonia taiwanensis (strain LMG 19424))).